We begin with the raw amino-acid sequence, 262 residues long: Tropinone reductase homolog At2g29290 (262 aa).

13–37 contributes to the NADP(+) binding site; that stretch reads LVTGGTKGIGEAVVEELSILGARVH. S146 is a binding site for substrate. Y159 acts as the Proton acceptor in catalysis.

It belongs to the short-chain dehydrogenases/reductases (SDR) family. SDR65C subfamily.

The sequence is that of Tropinone reductase homolog At2g29290 from Arabidopsis thaliana (Mouse-ear cress).